The following is a 244-amino-acid chain: Lytic polysaccharide monooxygenase-like protein ANIA_04702 (244 aa).

An N-terminal signal peptide occupies residues 1–23 (MLMSTSPSPWLAAAMLCIGLANA). Position 24 (histidine 24) interacts with Cu(2+). At histidine 24 the chain carries Methylhistidine. 6 N-linked (GlcNAc...) asparagine glycosylation sites follow: asparagine 57, asparagine 80, asparagine 118, asparagine 159, asparagine 192, and asparagine 198. 2 cysteine pairs are disulfide-bonded: cysteine 72/cysteine 177 and cysteine 142/cysteine 196. Asparagine 215 carries the GPI-anchor amidated asparagine lipid modification. Positions 216–244 (AGLEAVTVPSFLTAVVPTFLGIAYGLLMA) are cleaved as a propeptide — removed in mature form.

This sequence belongs to the X325 family. Cu(2+) serves as cofactor. The catalytically essential N-terminal histidine His-24 is post-translationally modified by methylation to prevent protonation of the histidine side chain, and protect the critical active site of the enzyme from oxidative damage.

The protein resides in the cell membrane. Lytic polysaccharide monooxygenase-like protein that has diverged to biological functions other than polysaccharide degradation since it does not perform oxidative cleavage of polysaccharides. Acts as a cell surface-bound protein that functions in the copper-accumulation pathway. May also act as the major cell wall sensor that regulates MAP kinase-dependent hyphal anastomosis, the fusion of hyphal cells. This Emericella nidulans (strain FGSC A4 / ATCC 38163 / CBS 112.46 / NRRL 194 / M139) (Aspergillus nidulans) protein is Lytic polysaccharide monooxygenase-like protein ANIA_04702.